The primary structure comprises 433 residues: Myricetin 3-O-glucosyl 1,2-rhamnoside 6'-O-caffeoyltransferase AT1 (433 aa).

Active-site proton acceptor residues include His-157 and Asp-375.

Belongs to the plant acyltransferase family. Expressed in young cromes.

It catalyses the reaction myricetin 3-O-[beta-D-glucosyl-(1-&gt;2)-alpha-L-rhamnoside] + (E)-caffeoyl-CoA = myricetin 3-O-[(6-O-(E)-caffeoyl-beta-D-glucosyl)-(1-&gt;2)-alpha-L-rhamnoside] + CoA. It participates in flavonoid metabolism. Its function is as follows. Caffeoyltransferase involved in montbretin A (MbA) biosynthesis. Catalyzes the caffeoylation of myricetin 3-O-beta-D-glucosyl 1,2-alpha-L-rhamnoside (MRG) to produce myricetin 3-O-(6'-O-caffeoyl)-beta-D-glucosyl 1,2-alpha-L-rhamnoside (mini-MbA), a precursor of MbA. Mini-MbA and MbA are potent inhibitors of human pancreatic alpha-amylase and are being developed as drug candidates to treat type-2 diabetes. In vitro, is able to catalyze the caffeoylation of quercetin 3-O-sophoroside (QGG), although QGG may not be a physiological substrate in vivo. In vitro, can use coumaryl-CoA, feruloyl-CoA and acetyl-CoA, although these three acyl donors may not be physiological in vivo. In Crocosmia x crocosmiiflora (Montbretia), this protein is Myricetin 3-O-glucosyl 1,2-rhamnoside 6'-O-caffeoyltransferase AT1.